The primary structure comprises 565 residues: MKMRVETALAILLVLISIQQCYGGVSNYTCTCFSSGNRSDILESNCSTSCNCRPDRDQWVCLCPANGFPVIAIGGSNSSCFTSCNCSAGATKSSKKQYLSRKLVIVILLFCGVLISLAFLASMICYICRKDKFSGQTPSVSSDRESSWHSSANLINRKSSVSQSKISISSSVAGCFFQNASLFCVSKPETIHGAIFQFSYTELEQATNKFSSNSVIGHGGSSCVYRGQLKDGKTAAIKRLNTPKGDDTDTLFSTEVELLSRLHHYHVVPLIGYCSEFHGKHAERLLVFEYMSYGSLRDCLDGELGEKMTWNIRISVALGAARGLEYLHEAAAPRILHRDVKSTNILLDENWHAKITDLGMAKCLSSDGLQSGSSSPTTGLQGTFGYFAPEYAIAGCASQMSDVFSFGVVLLELITGRKPIQKPSNNKGEESLVIWAVPRLQDSKRVIEELPDPRLNGKFAEEEMQIMAYLAKECLLLDPESRPTMREVVQILSTITPDTSSRRRNFPINYLFQSNEKKKESKVGWSRGGSKSGQEEETVDLTEPRFESFCLPNVKPVLLEPSAHI.

An N-terminal signal peptide occupies residues 1–23; sequence MKMRVETALAILLVLISIQQCYG. Over 24 to 103 the chain is Extracellular; the sequence is GVSNYTCTCF…SKKQYLSRKL (80 aa). Asn-27, Asn-37, Asn-45, Asn-77, and Asn-85 each carry an N-linked (GlcNAc...) asparagine glycan. The helical transmembrane segment at 104–124 threads the bilayer; the sequence is VIVILLFCGVLISLAFLASMI. Residues 125 to 565 are Cytoplasmic-facing; sequence CYICRKDKFS…PVLLEPSAHI (441 aa). In terms of domain architecture, Protein kinase spans 210–495; the sequence is FSSNSVIGHG…REVVQILSTI (286 aa). Residues 216–224 and Lys-238 each bind ATP; that span reads IGHGGSSCV. Asp-339 functions as the Proton acceptor in the catalytic mechanism. Residues Thr-378 and Thr-383 each carry the phosphothreonine modification. Residue Tyr-391 is modified to Phosphotyrosine.

This sequence belongs to the protein kinase superfamily. Ser/Thr protein kinase family. Interacts with ARAC5. Phosphorylated. As to expression, mostly expressed in leaf primordia, root and shoot apical meristems, lateral root primordia, and stele of older roots and hypocotyls. In leaves and cotyledons, highest levels observed in trichomes, vasculatures, and hydathode endothem.

Its subcellular location is the cell membrane. The protein localises to the prevacuolar compartment membrane. The protein resides in the endosome. It catalyses the reaction L-seryl-[protein] + ATP = O-phospho-L-seryl-[protein] + ADP + H(+). The catalysed reaction is L-threonyl-[protein] + ATP = O-phospho-L-threonyl-[protein] + ADP + H(+). The sequence is that of Receptor-like serine/threonine-protein kinase NCRK (NCRK) from Arabidopsis thaliana (Mouse-ear cress).